Reading from the N-terminus, the 355-residue chain is Carbohydrate sulfotransferase 10 (355 aa).

At 1–6 the chain is on the cytoplasmic side; sequence MHHRWL. The chain crosses the membrane as a helical; Signal-anchor for type II membrane protein span at residues 7–27; it reads LLVACFWVLFMLMVASKLITL. Over 28-355 the chain is Lumenal; the sequence is TMKDPEGYGN…FGYKEPTFLF (328 aa). Asn93 and Asn98 each carry an N-linked (GlcNAc...) asparagine glycan. Residues 126–132 and 188–196 each bind 3'-phosphoadenylyl sulfate; these read PKVGNTQ and RDPFERLIS. Asn316 is a glycosylation site (N-linked (GlcNAc...) asparagine).

This sequence belongs to the sulfotransferase 2 family.

The protein localises to the golgi apparatus membrane. Functionally, catalyzes the transfer of sulfate to position 3 of terminal glucuronic acid of both protein- and lipid-linked oligosaccharides. Participates in biosynthesis of HNK-1 carbohydrate structure, a sulfated glucuronyl-lactosaminyl residue carried by many neural recognition molecules. The protein is Carbohydrate sulfotransferase 10 (chst10) of Xenopus laevis (African clawed frog).